The sequence spans 403 residues: Protein-export membrane protein SecD (403 aa).

A run of 6 helical transmembrane segments spans residues 13–33 (LLVITAVWIVAATSLAVKGVN), 245–265 (FLKMAMIAGAIAFAAVSVIIA), 285–305 (VVFLIGLASLTGFTIDLPALA), 306–326 (GIILSIGSGVDDLIVITDEIV), 347–367 (VVLASFATLAAAMAVLFVAGM), and 368–388 (GLLKGFAIMTIAGAFYGVVIT).

Belongs to the SecD/SecF family. SecD subfamily. In terms of assembly, part of the protein translocation apparatus. Forms a complex with SecF.

It is found in the cell membrane. In terms of biological role, involved in protein export. The sequence is that of Protein-export membrane protein SecD from Methanopyrus kandleri (strain AV19 / DSM 6324 / JCM 9639 / NBRC 100938).